The primary structure comprises 308 residues: Large ribosomal subunit protein mL38 (308 aa).

A mitochondrion-targeting transit peptide spans 1–17 (MKRVWPRIPTISNVCRA).

Belongs to the phosphatidylethanolamine-binding protein family. Mitochondrion-specific ribosomal protein mL38 subfamily. In terms of assembly, component of the mitochondrial large ribosomal subunit (mt-LSU). Mature yeast 74S mitochondrial ribosomes consist of a small (37S) and a large (54S) subunit. The 37S small subunit contains a 15S ribosomal RNA (15S mt-rRNA) and at least 32 different proteins. The 54S large subunit contains a 21S rRNA (21S mt-rRNA) and at least 45 different proteins.

The protein localises to the mitochondrion. In terms of biological role, component of the mitochondrial ribosome (mitoribosome), a dedicated translation machinery responsible for the synthesis of mitochondrial genome-encoded proteins, including at least some of the essential transmembrane subunits of the mitochondrial respiratory chain. The mitoribosomes are attached to the mitochondrial inner membrane and translation products are cotranslationally integrated into the membrane. The polypeptide is Large ribosomal subunit protein mL38 (mrpl35) (Schizosaccharomyces pombe (strain 972 / ATCC 24843) (Fission yeast)).